Here is a 147-residue protein sequence, read N- to C-terminus: Cyanate hydratase (147 aa).

Catalysis depends on residues R88, E91, and S114.

It belongs to the cyanase family.

The enzyme catalyses cyanate + hydrogencarbonate + 3 H(+) = NH4(+) + 2 CO2. Catalyzes the reaction of cyanate with bicarbonate to produce ammonia and carbon dioxide. The sequence is that of Cyanate hydratase from Dechloromonas aromatica (strain RCB).